Here is a 90-residue protein sequence, read N- to C-terminus: Evasin P458 (90 aa).

Residues 1-24 (MEVKTFAFLQIAVLIAFSLHSASA) form the signal peptide. 3 disulfide bridges follow: Cys-44–Cys-63, Cys-48–Cys-65, and Cys-59–Cys-76. N-linked (GlcNAc...) asparagine glycosylation occurs at Asn-47.

The protein resides in the secreted. In terms of biological role, salivary chemokine-binding protein which binds to host chemokines CXCL1, CXCL2, CXCL3, CXCL5, CXCL6 and CXCL13. This is Evasin P458 from Ixodes ricinus (Common tick).